A 2275-amino-acid chain; its full sequence is MSKRQKEFHDSLANEKTRVRLYKSGKNWVKSGIKEIEMFKIMGLPFISHSLVSQDNQSISKKMTGYGLKTTAVIGGAFTVNMLHDQQAFAASDAPLTSELNTQSETVGNQNSTTIEASTSTADSTSVTKNSSSVQTSNSDTVSSEKSEKVTSTTNSTSNQQEKLTSTSESTSSKNTTSSSDTKSVASTSSTEQPINTSTNQSTASNNTSQSTTPSSVNLNKTSTTSTSTAPVKLRTFSRLAMSTFASAATTTAVTANTITVNKDNLKQYMTTSGNATYDQSTGIVTLTQDAYSQKGAITLGTRIDSNKSFHFSGKVNLGNKYEGNGNGGDGIGFAFSPGVLGETGLNGAAVGIGGLSNAFGFKLDTYHNTSKPNSAAKANADPSNVAGGGAFGAFVTTDSYGVATTYTSSSTADNAAKLKVQPTNNTFQDFDINYNGDTKVMTVTYAGQTWTRNISDWIAKSGTTNFSLSMTASTGGATNLQQVQFGTFEYTESAVTQVRYVDVTTGKDIIPPKTYSGNVDQVVTIDNQQSALTAKGYNYTSVDSSYASTYNDTNKTVKMTNAGQSVTYYFTDVKAPTVTVGNQTIEVGKTMNPVVLTTTDNGTGTVTNTVTGLPSGLSYDSATNSIIGTPTKIGQSTVTVVSTDQANNKSTTTFTINVVDTTAPTVTPIGDQSSEVYSPISPIKIATQDNSGNAVTNTVTGLPSGLTFDSTNNTISGTPTNIGTSTITIVSTDASGNKTTTTFKYEVTRNSMSDSVSTSGSTQQSQSVSTSKADSQSASTSTSGSIVVSTSASTSKSTSVSLSDSVSASKSLSTSESNSVSSSTSTSLVNSQSVSSSMSDSASKSTSLSDSISNSSSTEKSESLSTSTSDSLRTSTSLSDSLSMSTSGSLSKSKSLSTSTSESSSTSASLSDSTSNAISTSESLSESASTSDSISISNSIANSQSASTSKSDSQSTSISLSTSDSKSMSTSESLSDSTSTSGSVSGSLSIAASQSVSTSTSDSMSTSEIVSDSISTSGSLSASDSKSMSVSSSMSTSQSGSTSESLSDSQSTSDSDSKSLSLSTSQSGSTSTSTSTSASVRTSESQSTSGSMSASQSDSMSISTSFSDSTSDSKSASTASSESISQSASTSTSGSVSTSTSLSTSNSERTSTSMSDSTSLSTSESDSISESTSTSDSISEAISASESTFISLSESNSTSDSESQSASAFLSESLSESTSESTSESVSSSTSESTSLSDSTSESGSTSTSLSNSTSGSASISTSTSISESTSTFKSESVSTSLSMSTSTSLSDSTSLSTSLSDSTSDSKSDSLSTSMSTSDSISTSKSDSISTSTSLSGSTSESESDSTSSSESKSDSTSMSISMSQSTSGSTSTSTSTSLSDSTSTSLSLSASMNQSGVDSNSASQSASNSTSTSTSESDSQSTSSYTSQSTSQSESTSTSTSLSDSTSISKSTSQSGSVSTSASLSGSESESDSQSISTSASESTSESASTSLSDSTSTSNSGSASTSTSLSNSASASESDSSSTSLSDSTSASMQSSESDSQSTSASLSDSLSTSTSNRMSTIASLSTSVSTSESGSTSESTSESDSTSTSLSDSQSTSRSTSASGSASTSTSTSDSRSTSASTSTSMRTSTSDSQSMSLSTSTSTSMSDSTSLSDSVSDSTSDSTSASTSGSMSVSISLSDSTSTSTSASEVMSASISDSQSMSESVNDSESVSESNSESDSKSMSGSTSVSDSGSLSVSTSLRKSESVSESSSLSGSQSMSDSVSTSDSSSLSVSTSLRSSESVSESDSLSDSKSTSGSTSTSTSGSLSTSTSLSGSESVSESTSLSDSISMSDSTSTSDSDSLSGSISLSGSTSLSTSDSLSDSKSLSSSQSMSGSESTSTSVSDSQSSSTSNSQFDSMSISASESDSMSTSDSSSISGSNSTSTSLSTSDSMSGSVSVSTSTSLSDSISGSTSLSDSSSTSTSTSLSDSMSQSQSTSTSASGSLSTSISTSMSMSASTSSSQSTSVSTSLSTSDSISDSTSISISGSQSTVESESTSDSTSISDSESLSTSDSDSTSTSTSDSTSGSTSTSISESLSTSGSGSTSVSDSTSMSESDSTSVSMSQSMSGSTYNSTSVSDSESVSTSTSTSLSTSDSTSTSESLSTSMSGSQSISDSTSTSMSGSTSTSESNSMHPSDSMSMHHTHSTSTSRLSSEATTSTSESQSTLSATSEVTKHNGTPAQSEKRLPDTGDSIKQNGLLGGVMTLLVGLGLMKRKKKKDENDQDDSQA.

Positions 1–89 are cleaved as a signal peptide; sequence MSKRQKEFHD…VNMLHDQQAF (89 aa). The serine-rich repeat region 1, SRR1 stretch occupies residues 90 to 230; it reads AASDAPLTSE…KTSTTSTSTA (141 aa). The span at 100-111 shows a compositional bias: polar residues; sequence LNTQSETVGNQN. Disordered stretches follow at residues 100 to 229 and 751 to 2247; these read LNTQ…STST and NSMS…GLLG. Positions 112–128 are enriched in low complexity; sequence STTIEASTSTADSTSVT. Positions 129–140 are enriched in polar residues; that stretch reads KNSSSVQTSNSD. The span at 150 to 229 shows a compositional bias: low complexity; that stretch reads VTSTTNSTSN…NKTSTTSTST (80 aa). Residues 231-751 are non-repeat region (NRR); it reads PVKLRTFSRL…TTFKYEVTRN (521 aa). Low complexity-rich tracts occupy residues 752-1392 and 1402-2218; these read SMSD…LSLS and SNSA…ATSE. The segment at 752-2236 is serine-rich repeat region 2, SRR2; the sequence is SMSDSVSTSG…AQSEKRLPDT (1485 aa). Positions 2233–2237 match the LPXTG sorting signal motif; the sequence is LPDTG. Pentaglycyl murein peptidoglycan amidated threonine is present on threonine 2236. Residues 2237 to 2275 constitute a propeptide, removed by sortase; the sequence is GDSIKQNGLLGGVMTLLVGLGLMKRKKKKDENDQDDSQA.

It belongs to the serine-rich repeat protein (SRRP) family. In terms of processing, proteolytically cleaved by a metalloprotease. Post-translationally, glycosylated. It is probable that most of the Ser residues in SSR1 and SSR2 are O-GlcNAcylated. Sequential glycosylation by sugar transferases are able to generate complex sugar polymorphisms.

The protein localises to the secreted. The protein resides in the cell wall. Functionally, mediates binding to human platelets, possibly through a receptor-ligand interaction. Probably associated with virulence in endovascular infection. This Staphylococcus aureus (strain MSSA476) protein is Serine-rich adhesin for platelets (sraP).